We begin with the raw amino-acid sequence, 328 residues long: MAKIYRDVDASLEPLKGKTIAVIGYGIQGRAQALNLRDSGLNVILGLRRGGKSWDQAVAEGFRVFEIGQAVAKADVVMVLIPDMEQPKVWEEQIEPNLKPGTVVDFAHGFNIHFGLIKPPPNVDVVMVAPKGPGRAVREEYLSGRGVPALVAVYQNYSGRAMEYALAIAKGIGATRAGVIETTFAEETETDLIGEQTVLVGGLMELIKKGFETLVELGYQPEVAYFEVLNEAKLIMDLIWQRGIYGMLNGVSDTAKYGGLTVGPKIIDESVKQRMREAAARVRSGEFAKEWVTEYNRGGPTLRKLMEEVKNHQIEKVGIEMRRLLFGQ.

Residues 2 to 182 form the KARI N-terminal Rossmann domain; that stretch reads AKIYRDVDAS…GATRAGVIET (181 aa). NADP(+) is bound by residues 25–28, Arg-48, Ser-53, and 83–86; these read YGIQ and DMEQ. Residue His-108 is part of the active site. Residue Gly-134 coordinates NADP(+). The 146-residue stretch at 183–328 folds into the KARI C-terminal knotted domain; it reads TFAEETETDL…IEMRRLLFGQ (146 aa). Mg(2+)-binding residues include Asp-191, Glu-195, Glu-227, and Glu-231. Ser-252 lines the substrate pocket.

It belongs to the ketol-acid reductoisomerase family. Requires Mg(2+) as cofactor.

It catalyses the reaction (2R)-2,3-dihydroxy-3-methylbutanoate + NADP(+) = (2S)-2-acetolactate + NADPH + H(+). The catalysed reaction is (2R,3R)-2,3-dihydroxy-3-methylpentanoate + NADP(+) = (S)-2-ethyl-2-hydroxy-3-oxobutanoate + NADPH + H(+). Its pathway is amino-acid biosynthesis; L-isoleucine biosynthesis; L-isoleucine from 2-oxobutanoate: step 2/4. It functions in the pathway amino-acid biosynthesis; L-valine biosynthesis; L-valine from pyruvate: step 2/4. In terms of biological role, involved in the biosynthesis of branched-chain amino acids (BCAA). Catalyzes an alkyl-migration followed by a ketol-acid reduction of (S)-2-acetolactate (S2AL) to yield (R)-2,3-dihydroxy-isovalerate. In the isomerase reaction, S2AL is rearranged via a Mg-dependent methyl migration to produce 3-hydroxy-3-methyl-2-ketobutyrate (HMKB). In the reductase reaction, this 2-ketoacid undergoes a metal-dependent reduction by NADPH to yield (R)-2,3-dihydroxy-isovalerate. The protein is Ketol-acid reductoisomerase (NADP(+)) of Pyrobaculum arsenaticum (strain DSM 13514 / JCM 11321 / PZ6).